Reading from the N-terminus, the 477-residue chain is Multidrug resistance protein PmpM (477 aa).

12 helical membrane passes run 21–41 (LLTL…MGFV), 56–76 (AVAL…GTLL), 104–124 (LALL…EPIL), 133–153 (LIGP…AAAL), 171–191 (MVLG…LIYG), 202–222 (GCGW…LFWV), 253–273 (LPIG…ALLI), 286–306 (IALN…MAVT), 326–346 (GVGM…MLLL), 360–380 (VIAI…SDAL), 398–418 (MIMT…SLGL), and 431–451 (LWQG…IRLA).

This sequence belongs to the multi antimicrobial extrusion (MATE) (TC 2.A.66.1) family.

It localises to the cell inner membrane. In terms of biological role, multidrug efflux pump that functions as an H(+)/drug antiporter. Confers resistance to benzalkonium chloride, fluoroquinolones, ethidium bromide, acriflavine and tetraphenylphosphonium chloride. In Pseudomonas aeruginosa (strain ATCC 15692 / DSM 22644 / CIP 104116 / JCM 14847 / LMG 12228 / 1C / PRS 101 / PAO1), this protein is Multidrug resistance protein PmpM (pmpM).